The chain runs to 195 residues: Peptidyl-tRNA hydrolase (195 aa).

Tyr18 provides a ligand contact to tRNA. His23 functions as the Proton acceptor in the catalytic mechanism. Residues Phe69, Asn71, and Asn117 each contribute to the tRNA site.

It belongs to the PTH family. Monomer.

Its subcellular location is the cytoplasm. The enzyme catalyses an N-acyl-L-alpha-aminoacyl-tRNA + H2O = an N-acyl-L-amino acid + a tRNA + H(+). Functionally, hydrolyzes ribosome-free peptidyl-tRNAs (with 1 or more amino acids incorporated), which drop off the ribosome during protein synthesis, or as a result of ribosome stalling. Catalyzes the release of premature peptidyl moieties from peptidyl-tRNA molecules trapped in stalled 50S ribosomal subunits, and thus maintains levels of free tRNAs and 50S ribosomes. The polypeptide is Peptidyl-tRNA hydrolase (Alcanivorax borkumensis (strain ATCC 700651 / DSM 11573 / NCIMB 13689 / SK2)).